We begin with the raw amino-acid sequence, 83 residues long: Defensin-1 (83 aa).

An N-terminal signal peptide occupies residues 1 to 33; sequence MAGKGVGSRLSTLFLLVLLVITIGMMQVQVAEG. 4 cysteine pairs are disulfide-bonded: Cys36–Cys82, Cys47–Cys67, Cys53–Cys76, and Cys57–Cys78.

Belongs to the DEFL family.

It is found in the secreted. Functionally, plant defense peptide. Has antifungal activity against B.cinera, F.oxysporum, F.solani and H.annosum with IC(50) values of 0.4 ug/ml, 2.9 ug/ml, 0.9 ug/ml and 1.4 ug/ml, respectively. Has modest antifungal activity against C.albicans and T.reesei. Causes thickening of F.oxysporum hyphae and an increase in their branching. Lacks antibacterial activity against the Gram-negative bacteria E.coli and E.carotovora. In Pinus sylvestris (Scotch pine), this protein is Defensin-1.